We begin with the raw amino-acid sequence, 97 residues long: MRKYEIMCLISPELSEEDFKTLYEGIQQDIQNLGGEVQNVDVWGKRTLAYPVKKFTEGYYVVMNFLFPQTQLPEFERRLKLREKLLRYMITLLEKEE.

It belongs to the bacterial ribosomal protein bS6 family.

Binds together with bS18 to 16S ribosomal RNA. This chain is Small ribosomal subunit protein bS6, found in Dictyoglomus turgidum (strain DSM 6724 / Z-1310).